A 345-amino-acid chain; its full sequence is Very-long-chain 3-oxoacyl-CoA reductase (345 aa).

Residues Gly-26–Val-46 form a helical membrane-spanning segment. NADP(+)-binding residues include Val-71, Asp-125, Asp-133, Asn-152, Tyr-219, Lys-223, Ile-252, and Ser-254. The Proton donor role is filled by Tyr-219. Lys-223 (lowers pKa of active site Tyr) is an active-site residue.

Belongs to the short-chain dehydrogenases/reductases (SDR) family.

It localises to the endoplasmic reticulum membrane. The catalysed reaction is a very-long-chain (3R)-3-hydroxyacyl-CoA + NADP(+) = a very-long-chain 3-oxoacyl-CoA + NADPH + H(+). Its pathway is lipid metabolism; fatty acid biosynthesis. Functionally, component of the microsomal membrane bound fatty acid elongation system, which produces the 26-carbon very long-chain fatty acids (VLCFA) from palmitate. Catalyzes the reduction of the 3-ketoacyl-CoA intermediate that is formed in each cycle of fatty acid elongation. VLCFAs serve as precursors for ceramide and sphingolipids. The sequence is that of Very-long-chain 3-oxoacyl-CoA reductase from Aspergillus clavatus (strain ATCC 1007 / CBS 513.65 / DSM 816 / NCTC 3887 / NRRL 1 / QM 1276 / 107).